Here is a 768-residue protein sequence, read N- to C-terminus: Valine--tRNA ligase (768 aa).

The short motif at 37–47 (PTVSGKMHMGH) is the 'HIGH' region element. Positions 510–514 (KMSKS) match the 'KMSKS' region motif. Position 513 (K513) interacts with ATP.

This sequence belongs to the class-I aminoacyl-tRNA synthetase family. ValS type 2 subfamily.

Its subcellular location is the cytoplasm. The enzyme catalyses tRNA(Val) + L-valine + ATP = L-valyl-tRNA(Val) + AMP + diphosphate. Functionally, catalyzes the attachment of valine to tRNA(Val). As ValRS can inadvertently accommodate and process structurally similar amino acids such as threonine, to avoid such errors, it has a 'posttransfer' editing activity that hydrolyzes mischarged Thr-tRNA(Val) in a tRNA-dependent manner. In Picrophilus torridus (strain ATCC 700027 / DSM 9790 / JCM 10055 / NBRC 100828 / KAW 2/3), this protein is Valine--tRNA ligase.